Consider the following 74-residue polypeptide: DNA-directed RNA polymerase subunit omega (74 aa).

It belongs to the RNA polymerase subunit omega family. The RNAP catalytic core consists of 2 alpha, 1 beta, 1 beta' and 1 omega subunit. When a sigma factor is associated with the core the holoenzyme is formed, which can initiate transcription.

The catalysed reaction is RNA(n) + a ribonucleoside 5'-triphosphate = RNA(n+1) + diphosphate. Its function is as follows. Promotes RNA polymerase assembly. Latches the N- and C-terminal regions of the beta' subunit thereby facilitating its interaction with the beta and alpha subunits. The polypeptide is DNA-directed RNA polymerase subunit omega (Helicobacter pylori (strain P12)).